Reading from the N-terminus, the 588-residue chain is Adenine deaminase (588 aa).

The protein belongs to the metallo-dependent hydrolases superfamily. Adenine deaminase family. Homodimer. Requires Mn(2+) as cofactor.

It catalyses the reaction adenine + H2O + H(+) = hypoxanthine + NH4(+). In Escherichia coli O139:H28 (strain E24377A / ETEC), this protein is Adenine deaminase.